The chain runs to 72 residues: Translation initiation factor IF-1 (72 aa).

The region spanning 1 to 72 is the S1-like domain; that stretch reads MPKEEVLEFP…TKGRITYRFK (72 aa).

This sequence belongs to the IF-1 family. Component of the 30S ribosomal translation pre-initiation complex which assembles on the 30S ribosome in the order IF-2 and IF-3, IF-1 and N-formylmethionyl-tRNA(fMet); mRNA recruitment can occur at any time during PIC assembly.

The protein resides in the cytoplasm. Its function is as follows. One of the essential components for the initiation of protein synthesis. Stabilizes the binding of IF-2 and IF-3 on the 30S subunit to which N-formylmethionyl-tRNA(fMet) subsequently binds. Helps modulate mRNA selection, yielding the 30S pre-initiation complex (PIC). Upon addition of the 50S ribosomal subunit IF-1, IF-2 and IF-3 are released leaving the mature 70S translation initiation complex. This chain is Translation initiation factor IF-1, found in Chelativorans sp. (strain BNC1).